The following is a 198-amino-acid chain: Nucleoid occlusion factor SlmA (198 aa).

Residues 10 to 70 (NRREEILQSL…SLIEFIEDSL (61 aa)) form the HTH tetR-type domain. A DNA-binding region (H-T-H motif) is located at residues 33-52 (TTAKLAASVGVSEAALYRHF). Residues 117-144 (EQDRLQGRINQLFERIEAQLRQVLREKR) are a coiled coil.

Belongs to the nucleoid occlusion factor SlmA family. Homodimer. Interacts with FtsZ.

It localises to the cytoplasm. The protein localises to the nucleoid. In terms of biological role, required for nucleoid occlusion (NO) phenomenon, which prevents Z-ring formation and cell division over the nucleoid. Acts as a DNA-associated cell division inhibitor that binds simultaneously chromosomal DNA and FtsZ, and disrupts the assembly of FtsZ polymers. SlmA-DNA-binding sequences (SBS) are dispersed on non-Ter regions of the chromosome, preventing FtsZ polymerization at these regions. The protein is Nucleoid occlusion factor SlmA of Salmonella typhi.